Consider the following 582-residue polypeptide: Pescadillo homolog (582 aa).

Residues 277–329 (LSALSASLARVVATVEEEENQLDNFPTEEEDQENMQAREKEQKEQEAQKRLFE) adopt a coiled-coil conformation. The segment covering 294 to 309 (EENQLDNFPTEEEDQE) has biased composition (acidic residues). A disordered region spans residues 294 to 317 (EENQLDNFPTEEEDQENMQAREKE). The region spanning 323–416 (AQKRLFEGLK…MRLPVEDYFL (94 aa)) is the BRCT domain. Over residues 445-454 (ALQRGEKPVQ) the composition is skewed to basic and acidic residues. 2 disordered regions span residues 445–511 (ALQR…ETGS) and 554–582 (REVN…AKKQ). The span at 455–477 (EEDEEEEDEDEEEDDDVDDEEFT) shows a compositional bias: acidic residues. Over residues 478 to 490 (EEKNLKKMEDTRA) the composition is skewed to basic and acidic residues. Positions 517–582 (RLEQEEKAEE…QKKQKKAKKQ (66 aa)) form a coiled coil. The segment covering 572–582 (AQKKQKKAKKQ) has biased composition (basic residues).

This sequence belongs to the pescadillo family. In terms of assembly, component of the PeBoW complex, composed of bop1, pes1 and wdr12. The complex is held together by bop1, which interacts with pes1 via its N-terminal domain and with wdr12 via a high-affinity interaction between the seven-bladed beta-propeller domains of the 2 proteins. The PeBoW complex associates with the 66S pre-ribosome.

Its subcellular location is the nucleus. It localises to the nucleolus. The protein resides in the nucleoplasm. Component of the PeBoW complex, which is required for maturation of 28S and 5.8S ribosomal RNAs and formation of the 60S ribosome. This Salmo salar (Atlantic salmon) protein is Pescadillo homolog (pes1).